We begin with the raw amino-acid sequence, 157 residues long: Protein Smg homolog (157 aa).

This sequence belongs to the Smg family.

This chain is Protein Smg homolog, found in Shewanella loihica (strain ATCC BAA-1088 / PV-4).